The chain runs to 289 residues: Elongation factor Ts (289 aa).

The tract at residues 82–85 is involved in Mg(2+) ion dislocation from EF-Tu; it reads TDFL.

Belongs to the EF-Ts family.

Its subcellular location is the cytoplasm. In terms of biological role, associates with the EF-Tu.GDP complex and induces the exchange of GDP to GTP. It remains bound to the aminoacyl-tRNA.EF-Tu.GTP complex up to the GTP hydrolysis stage on the ribosome. The sequence is that of Elongation factor Ts from Azotobacter vinelandii (strain DJ / ATCC BAA-1303).